The following is a 438-amino-acid chain: Battenin (438 aa).

The segment at 1–27 (MGSSAGSWRRLEDSEREETDSEPQAPR) is disordered. At 1–37 (MGSSAGSWRRLEDSEREETDSEPQAPRLDSRSVLWKN) the chain is on the cytoplasmic side. S14 carries the phosphoserine modification. A helical membrane pass occupies residues 38 to 58 (AVGFWILGLCNNFSYVVMLSA). Residues 59-127 (AHDILKQEQA…GLHLLPYSPR (69 aa)) are Lumenal-facing. The tract at residues 67 to 87 (QASGNQSHVEPGPTPTPHNSS) is disordered. N-linked (GlcNAc...) asparagine glycans are attached at residues N71 and N85. The chain crosses the membrane as a helical span at residues 128 to 148 (VLVSGVCSAGSFVLVAFSQSV). Topologically, residues 149–151 (GLS) are cytoplasmic. Residues 152–172 (LCGVVLASISSGLGEVTFLSL) traverse the membrane as a helical segment. Residues 173-182 (TAFYPSAVIS) lie on the Lumenal side of the membrane. The chain crosses the membrane as a helical span at residues 183 to 203 (WWSSGTGGAGLLGSLSYLGLT). Over 204–277 (QAGLSPQHTL…DLSLQERWTV (74 aa)) the chain is Cytoplasmic. The segment at 239-261 (PGGENEAETAARQPLIGTETPES) is disordered. The short motif at 242 to 244 (ENE) is the Lysosomal targeting motif element. Residues 253 to 254 (LI) carry the Lysosomal targeting motif. Required for AP1G1, AP2A2 and AP3D1 interaction motif. A helical membrane pass occupies residues 278 to 298 (FKGLLWYIIPLVLVYFAEYFI). Over 299 to 346 (NQGLFELLFFRNTSLSHAQQYRWYQMLYQAGVFASRSSLQCCRIRFTW) the chain is Lumenal. An N-linked (GlcNAc...) asparagine glycan is attached at N310. Residues 347–367 (VLALLQCLNLALLLADVCLNF) traverse the membrane as a helical segment. Topologically, residues 368-438 (LPSIYLIFII…PLHDFLCHLP (71 aa)) are cytoplasmic. The Lysosomal targeting motif signature appears at 409–419 (MEAACISDTLG). C435 carries the cysteine methyl ester modification. C435 carries S-farnesyl cysteine lipidation. A propeptide spans 436–438 (HLP) (removed in mature form).

This sequence belongs to the battenin family. Homooligomer. Interacts with DCTN1, KIF3A, RAB7A and RILP. Interacts with CLN5. Interacts with KCNIP3. Highly glycosylated. Post-translationally, farnesylation is important for trafficking to lysosomes. As to expression, expressed throughout the brain, such as, in the cerebral cortex, hippocampus, cerebellum and several different cerebral nuclei (at protein level). In the cerebral cortex, expressed in all cortical layers. In the hippocampus, expressed in the granule cells in the dentate gyrus and the pyramidal cells of the hippocampus proper. In the cerebellum expressed in the granular and molecular layers, and in the Purkinje cell layer.

Its subcellular location is the lysosome membrane. The protein resides in the late endosome. The protein localises to the lysosome. It is found in the membrane raft. It localises to the golgi apparatus. Its subcellular location is the trans-Golgi network. The protein resides in the synapse. The protein localises to the synaptosome. It is found in the early endosome membrane. It localises to the late endosome membrane. Its subcellular location is the cytoplasmic vesicle. The protein resides in the autophagosome. Functionally, mediates microtubule-dependent, anterograde transport connecting the Golgi network, endosomes, autophagosomes, lysosomes and plasma membrane, and participates in several cellular processes such as regulation of lysosomal pH, lysosome protein degradation, receptor-mediated endocytosis, autophagy, transport of proteins and lipids from the TGN, apoptosis and synaptic transmission. Facilitates the proteins transport from trans-Golgi network (TGN)-to other membrane compartments such as transport of microdomain-associated proteins to the plasma membrane, IGF2R transport to the lysosome where it regulates the CTSD release leading to regulation of CTSD maturation and thereby APP intracellular processing. Moreover regulates CTSD activity in response to osmotic stress. Also binds galactosylceramide and transports it from the trans Golgi to the rafts, which may have immediate and downstream effects on cell survival by modulating ceramide synthesis. At the plasma membrane, regulates actin-dependent events including filopodia formation, cell migration, and pinocytosis through ARF1-CDC42 pathway and also the cytoskeleton organization through interaction with MYH10 and fodrin leading to the regulation of the plasma membrane association of Na+, K+ ATPase complex. Regulates synaptic transmission in the amygdala, hippocampus, and cerebellum through regulation of synaptic vesicles density and their proximity to active zones leading to modulation of short-term plasticity and age-dependent anxious behavior, learning and memory. Regulates autophagic vacuoles (AVs) maturation by modulating the trafficking between endocytic and autophagolysosomal/lysosomal compartments, which involves vesicle fusion leading to regulation of degradation process. Also participates in cellular homeostasis of compounds such as, water, ions, amino acids, proteins and lipids in several tissue namely in brain and kidney through regulation of their transport and synthesis. This Mus musculus (Mouse) protein is Battenin.